Reading from the N-terminus, the 386-residue chain is Succinate--CoA ligase [ADP-forming] subunit beta (386 aa).

Positions 9-244 constitute an ATP-grasp domain; that stretch reads KHILSRFGVS…YDEEIKEEIE (236 aa). ATP-binding positions include Lys46, 53-55, Glu99, Cys102, and Glu107; that span reads GRG. Mg(2+) contacts are provided by Asn199 and Asp213. Residues Asn264 and 320–322 contribute to the substrate site; that span reads GIM.

The protein belongs to the succinate/malate CoA ligase beta subunit family. As to quaternary structure, heterotetramer of two alpha and two beta subunits. It depends on Mg(2+) as a cofactor.

The catalysed reaction is succinate + ATP + CoA = succinyl-CoA + ADP + phosphate. It catalyses the reaction GTP + succinate + CoA = succinyl-CoA + GDP + phosphate. The protein operates within carbohydrate metabolism; tricarboxylic acid cycle; succinate from succinyl-CoA (ligase route): step 1/1. Functionally, succinyl-CoA synthetase functions in the citric acid cycle (TCA), coupling the hydrolysis of succinyl-CoA to the synthesis of either ATP or GTP and thus represents the only step of substrate-level phosphorylation in the TCA. The beta subunit provides nucleotide specificity of the enzyme and binds the substrate succinate, while the binding sites for coenzyme A and phosphate are found in the alpha subunit. This is Succinate--CoA ligase [ADP-forming] subunit beta from Ehrlichia canis (strain Jake).